A 476-amino-acid polypeptide reads, in one-letter code: Probable serine carboxypeptidase CPVL (476 aa).

Residues 1–22 (MVGTMWKVIVSLVLLMPGSCDG) form the signal peptide. 2 N-linked (GlcNAc...) asparagine glycosylation sites follow: asparagine 81 and asparagine 132. Serine 204 is an active-site residue. N-linked (GlcNAc...) asparagine glycans are attached at residues asparagine 307 and asparagine 346. Catalysis depends on residues aspartate 388 and histidine 448.

It belongs to the peptidase S10 family.

In terms of biological role, may be involved in the digestion of phagocytosed particles in the lysosome, participation in an inflammatory protease cascade, and trimming of peptides for antigen presentation. This chain is Probable serine carboxypeptidase CPVL (CPVL), found in Pongo abelii (Sumatran orangutan).